Here is a 239-residue protein sequence, read N- to C-terminus: MLNIGLSGSTGKMGETILERIDKFKDCKIAAKFNSTNNLDDLDNFCKNSDVIIDFSTPEILEKLINYALKHNTKLVIGTTGLQPQHFKLLEKAAQTLPVLYSANMSIGANLLSYLAKEVTKILDDYDVEILETHHRNKKDSPSGTAVMLAETIASKKGLNITFNRGNRLRSEKEIGISSLRGGNVHGIHEISFLGDDEIITLKHEALNKNSFSIGAIKAAIWLQDKPSALYSMQDIYKI.

Residues 8-13, 78-80, and 102-105 each bind NAD(+); these read GSTGKM, GTT, and SANM. The Proton donor/acceptor role is filled by His-134. (S)-2,3,4,5-tetrahydrodipicolinate is bound at residue His-135. The active-site Proton donor is Lys-138. 144–145 provides a ligand contact to (S)-2,3,4,5-tetrahydrodipicolinate; that stretch reads GT.

The protein belongs to the DapB family.

It localises to the cytoplasm. It carries out the reaction (S)-2,3,4,5-tetrahydrodipicolinate + NAD(+) + H2O = (2S,4S)-4-hydroxy-2,3,4,5-tetrahydrodipicolinate + NADH + H(+). The enzyme catalyses (S)-2,3,4,5-tetrahydrodipicolinate + NADP(+) + H2O = (2S,4S)-4-hydroxy-2,3,4,5-tetrahydrodipicolinate + NADPH + H(+). The protein operates within amino-acid biosynthesis; L-lysine biosynthesis via DAP pathway; (S)-tetrahydrodipicolinate from L-aspartate: step 4/4. Its function is as follows. Catalyzes the conversion of 4-hydroxy-tetrahydrodipicolinate (HTPA) to tetrahydrodipicolinate. In Rickettsia conorii (strain ATCC VR-613 / Malish 7), this protein is 4-hydroxy-tetrahydrodipicolinate reductase.